Consider the following 472-residue polypeptide: 3-isopropylmalate dehydratase large subunit (472 aa).

C347, C407, and C410 together coordinate [4Fe-4S] cluster.

The protein belongs to the aconitase/IPM isomerase family. LeuC type 1 subfamily. As to quaternary structure, heterodimer of LeuC and LeuD. Requires [4Fe-4S] cluster as cofactor.

The catalysed reaction is (2R,3S)-3-isopropylmalate = (2S)-2-isopropylmalate. Its pathway is amino-acid biosynthesis; L-leucine biosynthesis; L-leucine from 3-methyl-2-oxobutanoate: step 2/4. Its function is as follows. Catalyzes the isomerization between 2-isopropylmalate and 3-isopropylmalate, via the formation of 2-isopropylmaleate. This chain is 3-isopropylmalate dehydratase large subunit, found in Synechococcus sp. (strain CC9605).